A 287-amino-acid chain; its full sequence is ATP synthase gamma chain (287 aa).

The protein belongs to the ATPase gamma chain family. In terms of assembly, F-type ATPases have 2 components, CF(1) - the catalytic core - and CF(0) - the membrane proton channel. CF(1) has five subunits: alpha(3), beta(3), gamma(1), delta(1), epsilon(1). CF(0) has three main subunits: a, b and c.

It is found in the cell inner membrane. Its function is as follows. Produces ATP from ADP in the presence of a proton gradient across the membrane. The gamma chain is believed to be important in regulating ATPase activity and the flow of protons through the CF(0) complex. In Geotalea daltonii (strain DSM 22248 / JCM 15807 / FRC-32) (Geobacter daltonii), this protein is ATP synthase gamma chain.